The primary structure comprises 603 residues: F-box only protein 46 (603 aa).

Residues 20–63 (YSQNQPRPPSAALKPSACPEPGGGAEPDHGPAHSENTPPALATE) form a disordered region. A phosphoserine; by ATM mark is found at Ser-21 and Ser-67. Disordered stretches follow at residues 111 to 163 (GGSR…PASA), 235 to 301 (EAQR…ARAK), 326 to 360 (LLAR…RDCG), and 396 to 440 (TVSP…AEGT). The span at 152–163 (GPPAAEEGPASA) shows a compositional bias: low complexity. Phosphoserine is present on Ser-338. Thr-347 carries the post-translational modification Phosphothreonine. 2 stretches are compositionally biased toward pro residues: residues 347–356 (TPPAPPPPPA) and 417–426 (DGPPEPPPAD). One can recognise an F-box domain in the interval 470–522 (RQYMLLLPEHVLVKIFSFLPTRALAALKCTCHHFKGIIEAFGVRATDSRWSRD).

As to quaternary structure, part of a SCF (SKP1-cullin-F-box) protein ligase complex SCF(FBXO46) composed of CUL1, SKP1, RBX1 and FBXO46. Phosphorylated by ATM in response to DNA damage, promoting ubiquitination and degradation by the SCF(FBXO31) complex. Post-translationally, ATM-phosphorylated FBXO46 is ubiquitinated and degradaded by the SCF(FBXO31) complex in response to DNA damage.

The protein operates within protein modification; protein ubiquitination. Substrate-recognition component of the SCF(FBXO46) protein ligase complex, which mediates the ubiquitination and degradation of target proteins. In absence of stress, the SCF(FBXO46) complex catalyzes ubiquitination and degradation of MTOR-phosphorylated FBXO31. The protein is F-box only protein 46 of Homo sapiens (Human).